The following is a 186-amino-acid chain: Putative glutathione-dependent formaldehyde-activating enzyme (186 aa).

The region spanning 20–166 (FSGGKLRCKC…FKSIGLETYD (147 aa)) is the CENP-V/GFA domain. Positions 27, 29, 48, 50, 53, 95, and 98 each coordinate Zn(2+).

This sequence belongs to the Gfa family. Zn(2+) is required as a cofactor.

It carries out the reaction S-(hydroxymethyl)glutathione = glutathione + formaldehyde. It functions in the pathway one-carbon metabolism; formaldehyde degradation; formate from formaldehyde (glutathione route): step 1/3. Functionally, catalyzes the condensation of formaldehyde and glutathione to S-hydroxymethylglutathione. This Fusarium vanettenii (strain ATCC MYA-4622 / CBS 123669 / FGSC 9596 / NRRL 45880 / 77-13-4) (Fusarium solani subsp. pisi) protein is Putative glutathione-dependent formaldehyde-activating enzyme.